We begin with the raw amino-acid sequence, 448 residues long: Trigger factor (448 aa).

The PPIase FKBP-type domain maps to 160-245 (GDMLLMKVES…IQEIREEKLP (86 aa)).

The protein belongs to the FKBP-type PPIase family. Tig subfamily.

It localises to the cytoplasm. It carries out the reaction [protein]-peptidylproline (omega=180) = [protein]-peptidylproline (omega=0). Functionally, involved in protein export. Acts as a chaperone by maintaining the newly synthesized protein in an open conformation. Functions as a peptidyl-prolyl cis-trans isomerase. The sequence is that of Trigger factor from Dehalococcoides mccartyi (strain ATCC BAA-2266 / KCTC 15142 / 195) (Dehalococcoides ethenogenes (strain 195)).